The following is an 898-amino-acid chain: Netrin receptor UNC5A (898 aa).

The first 25 residues, 1–25 (MAVRPGLWPVLLGIVLAAWLRGSGA), serve as a signal peptide directing secretion. The Extracellular segment spans residues 26–361 (QQSATVANPV…TASCPEDVAL (336 aa)). The Ig-like domain occupies 44–141 (PHFLVEPEDV…SGTTKSQKAY (98 aa)). Cystine bridges form between cysteine 65–cysteine 126, cysteine 77–cysteine 124, and cysteine 170–cysteine 221. Residues asparagine 107 and asparagine 218 are each glycosylated (N-linked (GlcNAc...) asparagine). Residues 155–238 (PLAKEVSLEQ…RRRSTSAAVI (84 aa)) form the Ig-like C2-type domain. 2 consecutive TSP type-1 domains span residues 242–296 (NGGW…TLCP) and 298–350 (DGSW…DLCL). C-linked (Man) tryptophan glycosylation is found at tryptophan 245, tryptophan 248, and tryptophan 251. 3 disulfides stabilise this stretch: cysteine 254–cysteine 291, cysteine 258–cysteine 295, and cysteine 269–cysteine 281. Tryptophan 301 and tryptophan 304 each carry a C-linked (Man) tryptophan glycan. Intrachain disulfides connect cysteine 310–cysteine 344, cysteine 314–cysteine 349, and cysteine 322–cysteine 334. Asparagine 343 carries an N-linked (GlcNAc...) asparagine glycan. The helical transmembrane segment at 362 to 382 (YIGLVAVAVCLFLLLLALGLI) threads the bilayer. Residues 383–898 (YCRKKEGLDS…GLFTVSEAEC (516 aa)) lie on the Cytoplasmic side of the membrane. Residues 497 to 640 (NMAYGTFNFL…LGRFALVGEA (144 aa)) form the ZU5 domain. The segment at 661 to 679 (SLEYNIRVYCLHDTHDALK) is interaction with DCC. The region spanning 817 to 897 (QKIIASLDPP…AGLFTVSEAE (81 aa)) is the Death domain.

The protein belongs to the unc-5 family. As to quaternary structure, homodimer and homooligomer. Interacts with the cytoplasmic part of DCC. Interacts with MAGED1. Interacts with PRKCABP, possibly mediating some interaction with PKC. Interacts (via extracellular domain) with FLRT2 (via extracellular domain). Interacts (via extracellular domain) with FLRT3 (via extracellular domain). Phosphorylated on cytoplasmic tyrosine residues. Phosphorylated by PKC in vitro. Post-translationally, proteolytically cleaved by caspases during apoptosis. The cleavage does not take place when the receptor is associated with netrin ligand. Its cleavage by caspases is required to induce apoptosis. In terms of processing, the two extracellular TSRs of UNC5A contain WxxWxxWxxC motifs that can be C-mannosylated on all tryptophans. DPY19L1 preferentially mannosylates the first two tryptophans and DPY19L3 prefers the third. C-mannosylation by DPY19L1 is required for transport of UNC5A from the endoplasmic reticulum to the cell surface. As to expression, mainly expressed in regions of differentiating neurons. Expressed at early stages of neural tube development in the ventral spinal cord. In developing hindbrain, it colocalizes with a number of cranial motor neuron subpopulations from embryonic E11 to E14, while DCC is expressed by motor neurons at E12. Also expressed in non-neural structures, such as the basal plane of the hindbrain and midbrain, in the developing hypothalamus, thalamus and in the pallidum.

The protein localises to the cell membrane. It localises to the membrane raft. The protein resides in the cell projection. It is found in the neuron projection. Its function is as follows. Receptor for netrin required for axon guidance. Functions in the netrin signaling pathway and promotes neurite outgrowth in response to NTN1. Mediates axon repulsion of neuronal growth cones in the developing nervous system in response to netrin. Axon repulsion in growth cones may be mediated by its association with DCC that may trigger signaling for repulsion. It also acts as a dependence receptor required for apoptosis induction when not associated with netrin ligand. The polypeptide is Netrin receptor UNC5A (Unc5a) (Rattus norvegicus (Rat)).